The primary structure comprises 291 residues: Nucleotide-binding protein CMM_1747 (291 aa).

15-22 (GMSGAGRS) lines the ATP pocket. Residue 66–69 (DVRG) participates in GTP binding.

This sequence belongs to the RapZ-like family.

In terms of biological role, displays ATPase and GTPase activities. This chain is Nucleotide-binding protein CMM_1747, found in Clavibacter michiganensis subsp. michiganensis (strain NCPPB 382).